Reading from the N-terminus, the 335-residue chain is Olfactory receptor 10R2 (335 aa).

Topologically, residues 1–45 are extracellular; it reads MPQILIFTYLNMFYFFPPLQILAENLTMVTEFLLLGFSSLGEIQL. N-linked (GlcNAc...) asparagine glycosylation is present at Asn25. The chain crosses the membrane as a helical span at residues 46–66; sequence ALFVVFLFLYLVILSGNVTII. The Cytoplasmic segment spans residues 67-74; it reads SVIHLDKS. A helical transmembrane segment spans residues 75–95; that stretch reads LHTPMYFFLGILSTSETFYTF. The Extracellular portion of the chain corresponds to 96 to 119; the sequence is VILPKMLINLLSVARTISFNCCAL. The cysteines at positions 117 and 209 are disulfide-linked. Residues 120 to 140 traverse the membrane as a helical segment; that stretch reads QMFFFLGFAITNCLLLGVMGY. Residues 141–159 are Cytoplasmic-facing; that stretch reads DRYAAICHPLHYPTLMSWQ. Residues 160-180 traverse the membrane as a helical segment; it reads VCGKLAAACAIGGFLASLTVV. The Extracellular segment spans residues 181-217; that stretch reads NLVFSLPFCSANKVNHYFCDISAVILLACTNTDVNEF. Residues 218 to 237 traverse the membrane as a helical segment; it reads VIFICGVLVLVVPFLFICVS. Topologically, residues 238-257 are cytoplasmic; sequence YLCILRTILKIPSAEGRRKA. The chain crosses the membrane as a helical span at residues 258 to 278; sequence FSTCASHLSVVIVHYGCASFI. Residues 279 to 291 lie on the Extracellular side of the membrane; that stretch reads YLRPTANYVSNKD. The helical transmembrane segment at 292 to 312 threads the bilayer; that stretch reads RLVTVTYTIVTPLLNPMVYSL. Residues 313-335 are Cytoplasmic-facing; that stretch reads RNKDVQLAIRKVLGKKGSLKLYN.

The protein belongs to the G-protein coupled receptor 1 family.

It is found in the cell membrane. Odorant receptor. This is Olfactory receptor 10R2 (OR10R2) from Homo sapiens (Human).